Here is a 387-residue protein sequence, read N- to C-terminus: uncharacterized protein (387 aa).

This sequence to M.jannaschii MJ0043 N-terminal region.

This is an uncharacterized protein from Bacillus subtilis (strain 168).